Consider the following 898-residue polypeptide: Neutral alpha-glucosidase C (898 aa).

Residues glutamine 154–glutamine 173 are disordered. The segment covering threonine 157–glutamate 171 has biased composition (polar residues). Aspartate 495 acts as the Nucleophile in catalysis. Residue glutamate 498 is part of the active site. Residue aspartate 571 is the Proton donor of the active site.

It belongs to the glycosyl hydrolase 31 family.

It catalyses the reaction Hydrolysis of terminal, non-reducing (1-&gt;4)-linked alpha-D-glucose residues with release of alpha-D-glucose.. Functionally, has alpha-glucosidase activity. The sequence is that of Neutral alpha-glucosidase C (Ganc) from Mus musculus (Mouse).